Here is a 196-residue protein sequence, read N- to C-terminus: Small ribosomal subunit protein uS4c (196 aa).

Positions 15 to 36 (LGTLPGLTSKRPRSGSDLKNPL) are disordered. The S4 RNA-binding domain maps to 89-150 (MRLDNILFRL…KQRSKALIQN (62 aa)).

The protein belongs to the universal ribosomal protein uS4 family. As to quaternary structure, part of the 30S ribosomal subunit. Contacts protein S5. The interaction surface between S4 and S5 is involved in control of translational fidelity.

It localises to the plastid. The protein localises to the chloroplast. Its function is as follows. One of the primary rRNA binding proteins, it binds directly to 16S rRNA where it nucleates assembly of the body of the 30S subunit. Functionally, with S5 and S12 plays an important role in translational accuracy. The protein is Small ribosomal subunit protein uS4c (rps4) of Yucca filamentosa (Bear-grass).